Here is a 178-residue protein sequence, read N- to C-terminus: MSRIGNKVIVIPAGVSVEVNGATVTVKGPKGELVRSFNENITLDIAENEITVKRPNDTKEMKMLHGTTRALLANMVEGVSTGFSKALEMIGVGYRAQLQGTKLVLSVGKSHQDEVEAPENIKFVVATPTSIVVEGISKEAVGQTAAYIRSRRSPEPYKGKGIRYVGEYVRRKEGKTGK.

This sequence belongs to the universal ribosomal protein uL6 family. In terms of assembly, part of the 50S ribosomal subunit.

Functionally, this protein binds to the 23S rRNA, and is important in its secondary structure. It is located near the subunit interface in the base of the L7/L12 stalk, and near the tRNA binding site of the peptidyltransferase center. This Lactococcus lactis subsp. lactis (strain IL1403) (Streptococcus lactis) protein is Large ribosomal subunit protein uL6.